The primary structure comprises 61 residues: Temporin-1Tb (61 aa).

Residues 1-22 (MFTLKKSLLLLFFLGTINLSLC) form the signal peptide. A propeptide spanning residues 23-44 (EEERNAEEERRDEPDERDVQVE) is cleaved from the precursor. Leu-59 carries the leucine amide modification.

It belongs to the frog skin active peptide (FSAP) family. Temporin subfamily. As to quaternary structure, homo-oligomerizes in membranes as homodimers, homotrimers, or even homotetramers. Oligomerizes in presence of LPS. In Gram-positive bacterial mimetic membranes, the aggregation is weakly pronounced, and penetration proceeds more rapidly and is deeper than in Gram-negative bacterial mimetic membranes where aggregation is high. Homo-oligomerization is prevented by temporin-L. Expressed by the skin glands.

It is found in the secreted. It localises to the target cell membrane. The protein resides in the target cell. Its subcellular location is the target cell cytoplasm. In terms of biological role, amphipathic alpha-helical antimicrobial peptide with potent activity against Gram-positive bacteria, weak activity against Gram-negative bacteria, and moderate activity against fungi. Mainly acts by causing membrane permeabilization, but is unable to forme pore-like openings. Is also able to penetrate eukaryotic cells (keratinocytes), and kill intracellular S.aureus (both wild-type and MRSA) without injuring host cells. Shows inhibitory effect on biofilm formation of Gram-positive bacteria, but not of Gram-negative bacteria. Shows antiviral activity against herpes simplex virus 1 (HSV-1) by disrupting the viral envelope. Also displays anti-leishmania activity by damaging parasite membrane. Does not show hemolytic activity. Acts synergistically with temporin-L that improves temporin-1Tb activity by preventing its self-association in lipopolysaccharides (LPS). In vitro, promotes cell migration and wound healing. In Rana temporaria (European common frog), this protein is Temporin-1Tb.